A 918-amino-acid chain; its full sequence is Calcium-transporting ATPase type 2C member 1 (918 aa).

At 1-75 the chain is on the cytoplasmic side; the sequence is MKVARFQKIP…SEDEPLWKKY (75 aa). The helical transmembrane segment at 76–96 threads the bilayer; that stretch reads ISQFKNPLIMLLLASAVISVL. At 97–98 the chain is on the extracellular side; that stretch reads MH. The chain crosses the membrane as a helical span at residues 99-119; it reads QFDDAVSITVAILIVVTVAFV. The Cytoplasmic segment spans residues 120–267; that stretch reads QEYRSEKSLE…LQKSMDLLGK (148 aa). The chain crosses the membrane as a helical span at residues 268–288; that stretch reads QLSFYSFGIIGIIMLVGWLLG. Over 289–302 the chain is Extracellular; it reads KDILEMFTISVSLA. The helical transmembrane segment at 303–323 threads the bilayer; that stretch reads VAAIPEGLPIVVTVTLALGVM. Residues 324 to 703 lie on the Cytoplasmic side of the membrane; the sequence is RMVKKRAIVK…IYNNIKNFVR (380 aa). The active-site 4-aspartylphosphate intermediate is the Asp-350. Positions 643 and 647 each coordinate Mg(2+). The chain crosses the membrane as a helical span at residues 704-724; the sequence is FQLSTSIAALTLISLATLMNF. The Extracellular portion of the chain corresponds to 725-732; that stretch reads PNPLNAMQ. A helical transmembrane segment spans residues 733-753; the sequence is ILWINIIMDGPPAQSLGVEPV. The Cytoplasmic segment spans residues 754–773; sequence DKDVIRKPPRNWKDSILTKN. The helical transmembrane segment at 774-794 threads the bilayer; it reads LILKILVSSIIIVCGTLFVFW. Residues 795 to 842 lie on the Extracellular side of the membrane; the sequence is RELRDNVITPRDTTMTFTCFVFFDMFNALSSRSQTKSVFEIGLCSNKM. Residues 843-863 traverse the membrane as a helical segment; it reads FCYAVLGSIMGQLLVIYFPPL. Residues 864–873 are Cytoplasmic-facing; that stretch reads QKVFQTESLS. Residues 874 to 894 traverse the membrane as a helical segment; that stretch reads ILDLLFLLGLTSSVCIVAEII. Over 895-918 the chain is Extracellular; sequence KKVERSREKIQKHVSSTSSSFLEV.

It belongs to the cation transport ATPase (P-type) (TC 3.A.3) family. Type IIA subfamily. As to quaternary structure, monomer. Homodimer.

The protein localises to the golgi apparatus. It is found in the trans-Golgi network membrane. The protein resides in the golgi stack membrane. The enzyme catalyses Ca(2+)(in) + ATP + H2O = Ca(2+)(out) + ADP + phosphate + H(+). It catalyses the reaction Mn(2+)(in) + ATP + H2O = Mn(2+)(out) + ADP + phosphate + H(+). ATP-driven pump that supplies the Golgi apparatus with Ca(2+) and Mn(2+) ions, both essential cofactors for processing and trafficking of newly synthesized proteins in the secretory pathway. Within a catalytic cycle, acquires Ca(2+) or Mn(2+) ions on the cytoplasmic side of the membrane and delivers them to the lumenal side. The transfer of ions across the membrane is coupled to ATP hydrolysis and is associated with a transient phosphorylation that shifts the pump conformation from inward-facing to outward-facing state. Plays a primary role in the maintenance of Ca(2+) homeostasis in the trans-Golgi compartment with a functional impact on Golgi and post-Golgi protein sorting as well as a structural impact on cisternae morphology. Responsible for loading the Golgi stores with Ca(2+) ions in keratinocytes, contributing to keratinocyte differentiation and epidermis integrity. Participates in Ca(2+) and Mn(2+) ions uptake into the Golgi store of hippocampal neurons and regulates protein trafficking required for neural polarity. May also play a role in the maintenance of Ca(2+) and Mn(2+) homeostasis and signaling in the cytosol while preventing cytotoxicity. This is Calcium-transporting ATPase type 2C member 1 (ATP2C1) from Pongo abelii (Sumatran orangutan).